A 376-amino-acid chain; its full sequence is Arginine/serine-rich coiled-coil protein 2 (376 aa).

Positions 1 to 171 (MIRTNFLLKQ…PSPPPFRGRN (171 aa)) are disordered. Residues 13 to 52 (RHESKDKSSKRHKSEEHNDKEHSSDKGRERLNSSENGEDR) are compositionally biased toward basic and acidic residues. Serine 45 is modified (phosphoserine). A compositionally biased stretch (basic residues) spans 53–155 (HKRKERKSSR…KRIEKPRRFS (103 aa)). The stretch at 171–214 (NTAMDAQEALARRLERAKKLQEQREKEMVEKQKQQEMAAAAAAT) forms a coiled coil. A Glycyl lysine isopeptide (Lys-Gly) (interchain with G-Cter in SUMO1); alternate cross-link involves residue lysine 317. A Glycyl lysine isopeptide (Lys-Gly) (interchain with G-Cter in SUMO2); alternate cross-link involves residue lysine 317. Serine 318 carries the phosphoserine modification.

It belongs to the RSRC2 family.

This Rattus norvegicus (Rat) protein is Arginine/serine-rich coiled-coil protein 2 (Rsrc2).